The following is a 779-amino-acid chain: uncharacterized protein (779 aa).

Residues serine 97 and serine 120 each carry the phosphoserine modification. Basic and acidic residues predominate over residues 125-135 (EIDGEDEKKSV). Residues 125–174 (EIDGEDEKKSVGQESITGSAKRKDRRSKTNGSKRQKAEANREPPSDISLS) are disordered. Residues 144-158 (AKRKDRRSKTNGSKR) are compositionally biased toward basic residues. Basic and acidic residues predominate over residues 159–168 (QKAEANREPP). Residues 215 to 222 (GPPGCGKT) and 533 to 540 (GPPGCGKT) contribute to the ATP site. The segment at 759–779 (DRQKYQRLAKRWSSASTNDAD) is disordered.

Belongs to the AAA ATPase family.

It is found in the nucleus. This is an uncharacterized protein from Schizosaccharomyces pombe (strain 972 / ATCC 24843) (Fission yeast).